The following is a 718-amino-acid chain: NF-kappa-B inhibitor zeta (718 aa).

Residues 1-17 are compositionally biased toward basic and acidic residues; the sequence is MIVDKLLDDSRGGEGLR. Disordered stretches follow at residues 1–20 and 58–108; these read MIVD…RDAA and SAPG…RQQR. Residues 58-83 are compositionally biased toward low complexity; that stretch reads SAPGSPGSDSSDFSSASSVSSCGAVE. The span at 84–97 shows a compositional bias: basic and acidic residues; the sequence is SRSRGGARAERQPV. Residues 108–130 form the OCA domain; the sequence is RGPFQGVRVKNSVKELLLHIRSH. The Nuclear localization signal signature appears at 164-179; the sequence is KRKGPDSLSDGPACKR. Positions 186–211 are disordered; sequence QFLTPPQTPTPGESMEDVHLNEPKQE. Positions 201 to 211 are enriched in basic and acidic residues; the sequence is EDVHLNEPKQE. The required for transcriptional activity stretch occupies residues 321–394; sequence AYEPNLFDGP…MVGHEMASDS (74 aa). The tract at residues 404–718 is interaction with NFKB1/p50; it reads MGNPMNTTQL…KSIQQRAPPY (315 aa). ANK repeat units lie at residues 443–472, 479–508, 512–541, 551–580, 582–607, 612–641, and 648–681; these read DGDT…ALHM, NGQS…QVNT, WGRT…GSNQ, DGLT…HSPE, QELL…AVEA, SGRT…CLSF, and NGNT…DPST.

As to quaternary structure, interacts with NFKB1/p50. Interacts with RELA. Interacts with AKIRIN2. Expressed at high levels in peripheral blood leukocytes and lung, at moderate levels in liver, placenta, and at low levels in spleen, kidney, skeletal muscle and heart.

The protein resides in the nucleus. In terms of biological role, involved in regulation of NF-kappa-B transcription factor complexes. Inhibits NF-kappa-B activity without affecting its nuclear translocation upon stimulation. Inhibits DNA-binding of RELA and NFKB1/p50, and of the NF-kappa-B p65-p50 heterodimer and the NF-kappa-B p50-p50 homodimer. Also seems to activate NF-kappa-B-mediated transcription. In vitro, upon association with NFKB1/p50 has transcriptional activation activity and, together with NFKB1/p50 and RELA, is recruited to LCN2 promoters. Promotes transcription of LCN2 and DEFB4. Is recruited to IL-6 promoters and activates IL-6 but decreases TNF-alpha production in response to LPS. Seems to be involved in the induction of inflammatory genes activated through TLR/IL-1 receptor signaling. Involved in the induction of T helper 17 cells (Th17) differentiation upon recognition of antigen by T cell antigen receptor (TCR). The polypeptide is NF-kappa-B inhibitor zeta (NFKBIZ) (Homo sapiens (Human)).